The sequence spans 515 residues: Centromere protein T (515 aa).

2 disordered regions span residues 24-156 (ADSR…KRKQ) and 271-411 (LSGK…DPHK). A compositionally biased stretch (basic residues) spans 29 to 44 (PMRRRSTRINAQRRRS). The span at 45-58 (QTPYSNRQGSQTKT) shows a compositional bias: polar residues. Thr-86 carries the post-translational modification Phosphothreonine. Residues 94–375 (ILLTAPESST…DSLPAEQPPP (282 aa)) form a flexible stalk domain region. Positions 296–306 (SSGTRLQSRMS) are enriched in polar residues. Residues Ser-313, Ser-333, Ser-345, Ser-346, Ser-357, and Ser-376 each carry the phosphoserine modification.

The protein belongs to the CENP-T/CNN1 family. In terms of assembly, component of the CENPA-CAD complex, composed of CENPI, CENPK, CENPL, CENPO, CENPP, CENPQ, CENPR and CENPS. The CENPA-CAD complex is probably recruited on centromeres by the CENPA-NAC complex, at least composed of CENPA, CENPC, CENPH, CENPM, CENPN, CENPT and CENPU. Identified in a centromeric complex containing histones H2A, H2B, H3 and H4, and at least CENPA, CENPB, CENPC, CENPT, CENPN, HJURP, SUPT16H, SSRP1 and RSF1. Interacts (via N-terminus) with the NDC80 complex. Heterodimer with CENPW; this dimer coassembles with CENPS-CENPX heterodimers at centromeres to form the tetrameric CENP-T-W-S-X complex. Dynamically phosphorylated during the cell cycle. Phosphorylated during G2 phase, metaphase and anaphase, but not during telophase or G1 phase.

Its subcellular location is the nucleus. It localises to the chromosome. It is found in the centromere. The protein resides in the kinetochore. Component of the CENPA-NAC (nucleosome-associated) complex, a complex that plays a central role in assembly of kinetochore proteins, mitotic progression and chromosome segregation. The CENPA-NAC complex recruits the CENPA-CAD (nucleosome distal) complex and may be involved in incorporation of newly synthesized CENPA into centromeres. Part of a nucleosome-associated complex that binds specifically to histone H3-containing nucleosomes at the centromere, as opposed to nucleosomes containing CENPA. Component of the heterotetrameric CENP-T-W-S-X complex that binds and supercoils DNA, and plays an important role in kinetochore assembly. CENPT has a fundamental role in kinetochore assembly and function. It is one of the inner kinetochore proteins, with most further proteins binding downstream. Required for normal chromosome organization and normal progress through mitosis. The polypeptide is Centromere protein T (Cenpt) (Mus musculus (Mouse)).